We begin with the raw amino-acid sequence, 441 residues long: UPF0761 membrane protein Clim_1521 (441 aa).

Transmembrane regions (helical) follow at residues 54–74, 122–142, 161–181, 203–223, 233–253, and 266–286; these read IFLS…PFLA, TVPL…ISTI, AFTL…SSLG, LISF…YMLV, AFSG…WFVF, and GAIS…LVVL.

This sequence belongs to the UPF0761 family.

It is found in the cell inner membrane. The chain is UPF0761 membrane protein Clim_1521 from Chlorobium limicola (strain DSM 245 / NBRC 103803 / 6330).